Reading from the N-terminus, the 101-residue chain is MQLQYFLLIAAALFCIGVYGLVTSRNAVRVLMSIELMLNAVNLNLMAFSNYLDPQEIKGQMFTIFVITIAAAEAAVGLAIVLAIYRNRDTVDMEQFNLLKW.

3 helical membrane-spanning segments follow: residues 3 to 23, 30 to 50, and 64 to 84; these read LQYF…GLVT, VLMS…AFSN, and IFVI…VLAI.

This sequence belongs to the complex I subunit 4L family. NDH-1 can be composed of about 15 different subunits; different subcomplexes with different compositions have been identified which probably have different functions.

It is found in the cellular thylakoid membrane. It carries out the reaction a plastoquinone + NADH + (n+1) H(+)(in) = a plastoquinol + NAD(+) + n H(+)(out). The enzyme catalyses a plastoquinone + NADPH + (n+1) H(+)(in) = a plastoquinol + NADP(+) + n H(+)(out). NDH-1 shuttles electrons from an unknown electron donor, via FMN and iron-sulfur (Fe-S) centers, to quinones in the respiratory and/or the photosynthetic chain. The immediate electron acceptor for the enzyme in this species is believed to be plastoquinone. Couples the redox reaction to proton translocation, and thus conserves the redox energy in a proton gradient. Cyanobacterial NDH-1 also plays a role in inorganic carbon-concentration. In Leptolyngbya boryana (Plectonema boryanum), this protein is NAD(P)H-quinone oxidoreductase subunit 4L.